The primary structure comprises 204 residues: Thymidylate kinase (204 aa).

7–14 is a binding site for ATP; that stretch reads GGEGVGKT.

Belongs to the thymidylate kinase family.

The catalysed reaction is dTMP + ATP = dTDP + ADP. Functionally, phosphorylation of dTMP to form dTDP in both de novo and salvage pathways of dTTP synthesis. The chain is Thymidylate kinase from Synechococcus sp. (strain JA-3-3Ab) (Cyanobacteria bacterium Yellowstone A-Prime).